A 408-amino-acid polypeptide reads, in one-letter code: Phosphoglycerate kinase (408 aa).

Substrate-binding positions include 24 to 26 (DIN), Arg40, 63 to 66 (HQGR), Arg120, and Arg160. ATP-binding positions include Glu331 and 357–360 (GGHM).

It belongs to the phosphoglycerate kinase family.

It is found in the cytoplasm. The catalysed reaction is (2R)-3-phosphoglycerate + ATP = (2R)-3-phospho-glyceroyl phosphate + ADP. The protein operates within carbohydrate degradation; glycolysis; pyruvate from D-glyceraldehyde 3-phosphate: step 2/5. The chain is Phosphoglycerate kinase (pgk) from Saccharolobus solfataricus (strain ATCC 35092 / DSM 1617 / JCM 11322 / P2) (Sulfolobus solfataricus).